The sequence spans 210 residues: Mitochondrial cardiolipin hydrolase (210 aa).

Residues 1–6 (MLLWGR) lie on the Mitochondrial intermembrane side of the membrane. Residues 7-24 (WKVVAGLAGLALSLELLL) form a helical membrane-spanning segment. Residues 25–210 (RYMRRRKPIR…YDFFPEKENK (186 aa)) lie on the Cytoplasmic side of the membrane. In terms of domain architecture, PLD phosphodiesterase spans 138–165 (SSGYMHHKFAVVDGTVVLTGSLNWTVQA). Active-site residues include histidine 143, lysine 145, and aspartate 150.

It belongs to the phospholipase D family. MitoPLD/Zucchini subfamily. Homodimer.

It localises to the mitochondrion outer membrane. The catalysed reaction is a cardiolipin + H2O = a 1,2-diacyl-sn-glycero-3-phospho-(1'-sn-glycerol) + a 1,2-diacyl-sn-glycero-3-phosphate + H(+). Functionally, presents phospholipase and nuclease activities, depending on the different physiological conditions. Plays a key role in mitochondrial fusion and fission via its phospholipase activity. In its phospholipase role, it uses the mitochondrial lipid cardiolipin as substrate to generate phosphatidate (PA or 1,2-diacyl-sn-glycero-3-phosphate), a second messenger signaling lipid. Production of PA facilitates Mitofusin-mediated fusion, whereas the cleavage of PA by the Lipin family of phosphatases produces diacylgycerol (DAG) which promotes mitochondrial fission. Regulates mitochondrial shape through facilitating mitochondrial fusion. During spermatogenesis, plays a critical role in PIWI-interacting RNA (piRNA) biogenesis. piRNAs provide essential protection against the activity of mobile genetic elements. piRNA-mediated transposon silencing is thus critical for maintaining genome stability, in particular in germline cells when transposons are mobilized as a consequence of wide-spread genomic demethylation. Has been shown to be a backbone-non-specific, single strand-specific nuclease, cleaving either RNA or DNA substrates with similar affinity. Produces 5' phosphate and 3' hydroxyl termini, suggesting it could directly participate in the processing of primary piRNA transcripts. Has been proposed to act as a cardiolipin hydrolase to generate phosphatidic acid at mitochondrial surface. Although it cannot be excluded that it can act as a phospholipase in some circumstances, this activity could not be confirmed. The sequence is that of Mitochondrial cardiolipin hydrolase (pld6) from Xenopus tropicalis (Western clawed frog).